Reading from the N-terminus, the 153-residue chain is Partner of bursicon (153 aa).

The signal sequence occupies residues 1–35 (MCNSVRTALAASNCCSIVLCCVLLLTLTLTVAVTA). 5 disulfides stabilise this stretch: cysteine 44/cysteine 102, cysteine 68/cysteine 117, cysteine 77/cysteine 143, cysteine 81/cysteine 145, and cysteine 99/cysteine 148. Residues 44 to 139 (CETLPSEIHL…SATMEIRLKE (96 aa)) enclose the CTCK domain.

In terms of assembly, heterodimer of burs and pburs.

The protein localises to the secreted. Its function is as follows. Final heterodimeric neurohormone released at the end of the molting cycle, involved in the sclerotization (tanning) of the insect cuticle, melanization and wing spreading. In Anopheles gambiae (African malaria mosquito), this protein is Partner of bursicon.